An 856-amino-acid chain; its full sequence is Facilitated trehalose transporter Tret1 (856 aa).

2 disordered regions span residues 1–29 (MSGR…LKEK) and 62–202 (DPFL…KATS). Topologically, residues 1–389 (MSGRDNRGAG…LEVYRPTTNP (389 aa)) are cytoplasmic. Residues 69 to 80 (VSPQRHPQTVRT) are compositionally biased toward polar residues. Positions 133-142 (EIREHRDRQQ) are enriched in basic and acidic residues. The span at 170-180 (GNSNTNSNKAA) shows a compositional bias: polar residues. Ser247, Ser248, Ser249, Ser319, and Ser321 each carry phosphoserine. Residues 326–345 (LTSRQHFQQQRSISTDSRKS) are disordered. The segment covering 329–340 (RQHFQQQRSIST) has biased composition (polar residues). The helical transmembrane segment at 390–410 (IFIWTQVIAALSVSLGSLVVG) threads the bilayer. The Extracellular segment spans residues 411-439 (FVSAYTSPALVSMSDPNITSFTVTKDAGS). A glycan (N-linked (GlcNAc...) asparagine) is linked at Asn427. Residues 440–460 (WVGGIMPLAGLVGGVAGGPLI) form a helical membrane-spanning segment. The Cytoplasmic segment spans residues 461-472 (EYMGRRNTILAT). Residues 473–493 (AVPFIVSSLLIACAVNVAMVL) form a helical membrane-spanning segment. Residues 494–496 (CGR) lie on the Extracellular side of the membrane. Residues 497-517 (FLAGFCVGIASLSLPVYLGET) traverse the membrane as a helical segment. Residues 518–527 (VQPEVRGTLG) lie on the Cytoplasmic side of the membrane. Residues 528–548 (LLPTAFGNIGILVCFVAGSFM) form a helical membrane-spanning segment. Asn549 is a glycosylation site (N-linked (GlcNAc...) asparagine). Topologically, residues 549–551 (NWS) are extracellular. Residues 552–572 (MLAFLGAALPVPFLILMFLIP) traverse the membrane as a helical segment. Residues 573 to 635 (ETPRWYVSRG…ELLKRNNLKP (63 aa)) lie on the Cytoplasmic side of the membrane. The chain crosses the membrane as a helical span at residues 636–656 (LSISLGLMFFQQFSGINAVIF). The Extracellular segment spans residues 657 to 672 (YTVQIFKDAGSTIDGN). The helical transmembrane segment at 673-693 (VCTIIVGVVNFVATFIGILLI) threads the bilayer. Residues 694 to 699 (DRAGRK) are Cytoplasmic-facing. A helical transmembrane segment spans residues 700 to 720 (ILLYASDIAMVLTLFVLGGFF). Residues 721–739 (YCKAHGPDVSHLGWLPLTC) are Extracellular-facing. A helical transmembrane segment spans residues 740–760 (FVVYILGFSVGFGPIPWLMMG). Topologically, residues 761 to 766 (EILPAK) are cytoplasmic. A helical transmembrane segment spans residues 767 to 787 (IRGAAASVATSFNWTCTFVVT). Residues 788 to 800 (KTFQDLVGSLGAH) lie on the Extracellular side of the membrane. Residues 801–821 (GAFWLFGAICFVGLFFVILYV) traverse the membrane as a helical segment. At 822 to 856 (PETQGKTLEDIERKMMGRVRRMSSVANIKPLSFNM) the chain is on the cytoplasmic side. Phosphoserine is present on residues Ser844 and Ser845.

This sequence belongs to the major facilitator superfamily. Sugar transporter (TC 2.A.1.1) family. Trehalose transporter subfamily.

The protein localises to the cell membrane. Its function is as follows. Low-capacity facilitative transporter for trehalose. Does not transport maltose, sucrose or lactose. Mediates the bidirectional transfer of trehalose. Responsible for the transport of trehalose synthesized in the fat body and the incorporation of trehalose into other tissues that require a carbon source, thereby regulating trehalose levels in the hemolymph. This chain is Facilitated trehalose transporter Tret1, found in Drosophila yakuba (Fruit fly).